We begin with the raw amino-acid sequence, 269 residues long: 4-hydroxy-tetrahydrodipicolinate reductase (269 aa).

NAD(+)-binding positions include 13–18 (GASGRM) and Asp39. Arg40 contributes to the NADP(+) binding site. Residues 101-103 (GTT) and 125-128 (APNM) contribute to the NAD(+) site. His158 serves as the catalytic Proton donor/acceptor. His159 contributes to the (S)-2,3,4,5-tetrahydrodipicolinate binding site. Lys162 serves as the catalytic Proton donor. Position 168–169 (168–169 (GT)) interacts with (S)-2,3,4,5-tetrahydrodipicolinate.

Belongs to the DapB family.

It is found in the cytoplasm. The catalysed reaction is (S)-2,3,4,5-tetrahydrodipicolinate + NAD(+) + H2O = (2S,4S)-4-hydroxy-2,3,4,5-tetrahydrodipicolinate + NADH + H(+). It catalyses the reaction (S)-2,3,4,5-tetrahydrodipicolinate + NADP(+) + H2O = (2S,4S)-4-hydroxy-2,3,4,5-tetrahydrodipicolinate + NADPH + H(+). Its pathway is amino-acid biosynthesis; L-lysine biosynthesis via DAP pathway; (S)-tetrahydrodipicolinate from L-aspartate: step 4/4. Functionally, catalyzes the conversion of 4-hydroxy-tetrahydrodipicolinate (HTPA) to tetrahydrodipicolinate. This chain is 4-hydroxy-tetrahydrodipicolinate reductase, found in Bordetella bronchiseptica (strain ATCC BAA-588 / NCTC 13252 / RB50) (Alcaligenes bronchisepticus).